Reading from the N-terminus, the 152-residue chain is Small ribosomal subunit protein uS13z/uS13y/uS13x (152 aa).

N-acetylserine is present on serine 2.

It belongs to the universal ribosomal protein uS13 family.

The protein resides in the cytoplasm. Located at the top of the head of the 40S subunit, it contacts several helices of the 18S rRNA. This is Small ribosomal subunit protein uS13z/uS13y/uS13x (RPS18A) from Arabidopsis thaliana (Mouse-ear cress).